A 208-amino-acid chain; its full sequence is Probable splicing factor, arginine/serine-rich 5 (208 aa).

An RRM domain is found at 2-74 (PRLYLGKIPY…MRLVVEMARG (73 aa)). The interval 71 to 208 (MARGKPRGND…RSPSPGSPKD (138 aa)) is disordered. Positions 84–123 (SRSPRRRSRSPRRRSRTPPRRRSRSRDRKRSRRSRSRSSS) are enriched in basic residues. Residues 128-153 (PVRESRRRSESRSPSPKRDLKREASR) show a composition bias toward basic and acidic residues.

This sequence belongs to the splicing factor SR family. In terms of processing, extensively phosphorylated on serine residues in the RS domain.

It is found in the nucleus. Its function is as follows. Plays a functionally redundant role in shifting germ cell sexual differentiation in hermaphrodites. This is Probable splicing factor, arginine/serine-rich 5 (rsp-5) from Caenorhabditis elegans.